Here is a 343-residue protein sequence, read N- to C-terminus: Cytoplasmic tRNA 2-thiolation protein 1 (343 aa).

This sequence belongs to the TtcA family. CTU1/NCS6/ATPBD3 subfamily.

The protein resides in the cytoplasm. It functions in the pathway tRNA modification; 5-methoxycarbonylmethyl-2-thiouridine-tRNA biosynthesis. In terms of biological role, plays a central role in 2-thiolation of mcm(5)S(2)U at tRNA wobble positions of tRNA(Lys), tRNA(Glu) and tRNA(Gln). Directly binds tRNAs and probably acts by catalyzing adenylation of tRNAs, an intermediate required for 2-thiolation. It is unclear whether it acts as a sulfurtransferase that transfers sulfur from thiocarboxylated URM1 onto the uridine of tRNAs at wobble position. The sequence is that of Cytoplasmic tRNA 2-thiolation protein 1 from Drosophila yakuba (Fruit fly).